A 149-amino-acid chain; its full sequence is MALGDTIKRLFSNEEDDYYEEDGYEQSQQQEQQTTQQTSSQPRFVRQTTQSQTPAGLNSANSKIALFEPKVYSDSRSIASQILGGEAAIVNFTQIDEAQAKRILDFLGGTIYAVNGEIERIGQSIFLVTPNTFEISGTLTDNLEPNSRY.

Positions 12-57 (SNEEDDYYEEDGYEQSQQQEQQTTQQTSSQPRFVRQTTQSQTPAGL) are disordered. Positions 13–24 (NEEDDYYEEDGY) are enriched in acidic residues. Low complexity predominate over residues 25 to 41 (EQSQQQEQQTTQQTSSQ). Over residues 46–57 (RQTTQSQTPAGL) the composition is skewed to polar residues.

This sequence belongs to the SepF family. As to quaternary structure, homodimer. Interacts with FtsZ.

The protein localises to the cytoplasm. Functionally, cell division protein that is part of the divisome complex and is recruited early to the Z-ring. Probably stimulates Z-ring formation, perhaps through the cross-linking of FtsZ protofilaments. Its function overlaps with FtsA. The polypeptide is Cell division protein SepF (Leuconostoc mesenteroides subsp. mesenteroides (strain ATCC 8293 / DSM 20343 / BCRC 11652 / CCM 1803 / JCM 6124 / NCDO 523 / NBRC 100496 / NCIMB 8023 / NCTC 12954 / NRRL B-1118 / 37Y)).